Here is a 138-residue protein sequence, read N- to C-terminus: Integration host factor subunit beta (138 aa).

The segment covering 81-98 has biased composition (basic and acidic residues); sequence KAGKELRERVDRSLERQG. Positions 81-138 are disordered; it reads KAGKELRERVDRSLERQGDSSSEGEPVSLTAVKAARQAGGHHAAGFPAEATPTLVMSR.

Belongs to the bacterial histone-like protein family. As to quaternary structure, heterodimer of an alpha and a beta chain.

Functionally, this protein is one of the two subunits of integration host factor, a specific DNA-binding protein that functions in genetic recombination as well as in transcriptional and translational control. The chain is Integration host factor subunit beta from Ralstonia nicotianae (strain ATCC BAA-1114 / GMI1000) (Ralstonia solanacearum).